The following is a 1412-amino-acid chain: Sister chromatid cohesion protein PDS5 homolog B (1412 aa).

Residues 383–419 (LLVNDHLLNFVRERTLDKRWRVRKEAMMGLAQIYKKY) form an HEAT repeat. Residues 1137–1412 (PLSSAGKQSQ…RRRTSKRERR (276 aa)) form a disordered region. Composition is skewed to low complexity over residues 1139-1149 (SSAGKQSQSKS) and 1156-1167 (SNASSSSNPSSP). Basic and acidic residues-rich tracts occupy residues 1172 to 1184 (GRLD…HSEN), 1196 to 1212 (KKTD…LEKP), 1223 to 1241 (SEEK…DQKL), and 1263 to 1272 (QEEKRLKEDV). A compositionally biased stretch (acidic residues) spans 1322-1331 (VEEEEEEEER). Residues 1350–1362 (RTQQSRAGRSKQA) show a composition bias toward polar residues. The span at 1386 to 1397 (VPQEEVMEEEEV) shows a compositional bias: acidic residues. The segment covering 1402–1412 (VRRRTSKRERR) has biased composition (basic residues).

As to quaternary structure, interacts with the cohesin complex.

It is found in the nucleus. Functionally, plays a role in androgen-induced proliferative arrest. Required for maintenance of sister chromatid cohesion during mitosis. The chain is Sister chromatid cohesion protein PDS5 homolog B (PDS5B) from Gallus gallus (Chicken).